Consider the following 724-residue polypeptide: Phosphoribosylformylglycinamidine synthase subunit PurL (724 aa).

Residue H34 is part of the active site. ATP contacts are provided by Y37 and K75. E77 is a Mg(2+) binding site. Substrate-binding positions include 78 to 81 (SHNH) and R100. Residue H79 is the Proton acceptor of the active site. D101 lines the Mg(2+) pocket. Substrate is bound at residue Q221. D249 is a Mg(2+) binding site. 292–294 (ESQ) is a binding site for substrate. 2 residues coordinate ATP: D478 and G515. Residue S518 participates in substrate binding.

Belongs to the FGAMS family. Monomer. Part of the FGAM synthase complex composed of 1 PurL, 1 PurQ and 2 PurS subunits.

The protein resides in the cytoplasm. It carries out the reaction N(2)-formyl-N(1)-(5-phospho-beta-D-ribosyl)glycinamide + L-glutamine + ATP + H2O = 2-formamido-N(1)-(5-O-phospho-beta-D-ribosyl)acetamidine + L-glutamate + ADP + phosphate + H(+). The protein operates within purine metabolism; IMP biosynthesis via de novo pathway; 5-amino-1-(5-phospho-D-ribosyl)imidazole from N(2)-formyl-N(1)-(5-phospho-D-ribosyl)glycinamide: step 1/2. In terms of biological role, part of the phosphoribosylformylglycinamidine synthase complex involved in the purines biosynthetic pathway. Catalyzes the ATP-dependent conversion of formylglycinamide ribonucleotide (FGAR) and glutamine to yield formylglycinamidine ribonucleotide (FGAM) and glutamate. The FGAM synthase complex is composed of three subunits. PurQ produces an ammonia molecule by converting glutamine to glutamate. PurL transfers the ammonia molecule to FGAR to form FGAM in an ATP-dependent manner. PurS interacts with PurQ and PurL and is thought to assist in the transfer of the ammonia molecule from PurQ to PurL. This Caldivirga maquilingensis (strain ATCC 700844 / DSM 13496 / JCM 10307 / IC-167) protein is Phosphoribosylformylglycinamidine synthase subunit PurL.